The following is a 144-amino-acid chain: Small ribosomal subunit protein uS9 (144 aa).

T2 is modified (N-acetylthreonine). A disordered region spans residues R124–R144.

This sequence belongs to the universal ribosomal protein uS9 family.

The polypeptide is Small ribosomal subunit protein uS9 (rps-16) (Caenorhabditis elegans).